The following is a 103-amino-acid chain: Photosystem II 5 kDa protein, chloroplastic (103 aa).

The transit peptide at 1–75 (MASMTMTATF…LAKVAMAEEE (75 aa)) directs the protein to the chloroplast.

In terms of processing, the maturation of the PSII-T precursor to its final form occurs through a two step process. First, a stromal intermediate is formed, which, upon translocation into the thylakoid membrane, is processed to the mature protein.

Its subcellular location is the plastid. It is found in the chloroplast thylakoid membrane. Its function is as follows. May be a component of the oxygen-evolving complex. This chain is Photosystem II 5 kDa protein, chloroplastic (PSBT), found in Arabidopsis thaliana (Mouse-ear cress).